A 90-amino-acid chain; its full sequence is Probable small nuclear ribonucleoprotein F (90 aa).

The region spanning 7-80 is the Sm domain; sequence NPRPFLQDLV…VLYIKKADEA (74 aa).

This sequence belongs to the snRNP Sm proteins family. SmF/LSm6 subfamily.

Its subcellular location is the nucleus. The protein localises to the cytoplasm. In terms of biological role, plays a role in pre-mRNA splicing as a core component of the spliceosomal U1, U2, U4 and U5 small nuclear ribonucleoproteins (snRNPs), the building blocks of the spliceosome. This is Probable small nuclear ribonucleoprotein F from Neurospora crassa (strain ATCC 24698 / 74-OR23-1A / CBS 708.71 / DSM 1257 / FGSC 987).